The primary structure comprises 310 residues: 2-dehydropantoate 2-reductase (310 aa).

NADP(+) is bound by residues 9–14 (GVGAIG) and Asn-100. Substrate is bound at residue Asn-100. The active-site Proton donor is Lys-184. Asn-188, Asn-192, and Ser-259 together coordinate substrate. Position 270 (Glu-270) interacts with NADP(+).

It belongs to the ketopantoate reductase family.

It is found in the cytoplasm. The catalysed reaction is (R)-pantoate + NADP(+) = 2-dehydropantoate + NADPH + H(+). It functions in the pathway cofactor biosynthesis; (R)-pantothenate biosynthesis; (R)-pantoate from 3-methyl-2-oxobutanoate: step 2/2. In terms of biological role, catalyzes the NADPH-dependent reduction of ketopantoate into pantoic acid. In Aquifex aeolicus (strain VF5), this protein is 2-dehydropantoate 2-reductase.